Here is a 578-residue protein sequence, read N- to C-terminus: Protein O-linked-mannose beta-1,4-N-acetylglucosaminyltransferase 2 (578 aa).

Residues 1 to 4 (MNIS) lie on the Cytoplasmic side of the membrane. A helical; Signal-anchor for type II membrane protein transmembrane segment spans residues 5–25 (AVFSALLVSIMAAVLWKHVKL). The Lumenal portion of the chain corresponds to 26–578 (LDQFYVIEEE…PFAEVLVCST (553 aa)). N-linked (GlcNAc...) asparagine glycans are attached at residues Asn-98, Asn-275, Asn-335, Asn-451, Asn-541, and Asn-563. One can recognise a Fibronectin type-III domain in the interval 484–578 (RESKCQASAQ…PFAEVLVCST (95 aa)).

This sequence belongs to the glycosyltransferase 61 family.

The protein resides in the endoplasmic reticulum membrane. The enzyme catalyses 3-O-(alpha-D-mannosyl)-L-threonyl-[protein] + UDP-N-acetyl-alpha-D-glucosamine = 3-O-(N-acetyl-beta-D-glucosaminyl-(1-&gt;4)-alpha-D-mannosyl)-L-threonyl-[protein] + UDP + H(+). It participates in protein modification; protein glycosylation. Functionally, O-linked mannose beta-1,4-N-acetylglucosaminyltransferase that transfers UDP-N-acetyl-D-glucosamine to the 4-position of the mannose to generate N-acetyl-D-glucosamine-beta-1,4-O-D-mannosylprotein. Involved in the biosynthesis of the phosphorylated O-mannosyl trisaccharide (N-acetylgalactosamine-beta-3-N-acetylglucosamine-beta-4-(phosphate-6-)mannose), a carbohydrate structure present in alpha-dystroglycan (DAG1), which is required for binding laminin G-like domain-containing extracellular proteins with high affinity. In Xenopus laevis (African clawed frog), this protein is Protein O-linked-mannose beta-1,4-N-acetylglucosaminyltransferase 2 (pomgnt2).